The primary structure comprises 158 residues: Low molecular weight phosphotyrosine protein phosphatase (158 aa).

A2 carries the N-acetylalanine modification. C13 functions as the Nucleophile in the catalytic mechanism. R19 is an active-site residue. D130 acts as the Proton donor in catalysis. 2 positions are modified to phosphotyrosine: Y132 and Y133.

The protein belongs to the low molecular weight phosphotyrosine protein phosphatase family. In terms of assembly, interacts with EPHA2; dephosphorylates EPHA2. Interacts with EPHB1. As to quaternary structure, interacts with the SH3 domain of SPTAN1. There is no interaction observed for isoform 2. Phosphorylated by LCK. Phosphorylation at Tyr-132 increases its phosphatase activity.

The protein localises to the cytoplasm. It catalyses the reaction O-phospho-L-tyrosyl-[protein] + H2O = L-tyrosyl-[protein] + phosphate. The enzyme catalyses a phosphate monoester + H2O = an alcohol + phosphate. Its activity is regulated as follows. Inhibited by sulfhydryl reagents. Its function is as follows. Acts on tyrosine phosphorylated proteins, low-MW aryl phosphates and natural and synthetic acyl phosphates with differences in substrate specificity between isoform 1 and isoform 2. In Rattus norvegicus (Rat), this protein is Low molecular weight phosphotyrosine protein phosphatase.